Here is a 1546-residue protein sequence, read N- to C-terminus: Hybrid signal transduction histidine kinase D (1546 aa).

Residues 36–63 are a coiled coil; that stretch reads MRKQKPDHEKTREELIEEINHLRAVSNS. In terms of domain architecture, PAS spans 65-131; that stretch reads KNARIMLDEM…NIDNVREAVH (67 aa). The 55-residue stretch at 139–193 folds into the PAC domain; the sequence is IRYETEIFGKSAGTEKITIDFSLMPLFNDKGEVSLILPEGRNITEKRLGELEIER. The region spanning 218–440 is the Histidine kinase 1 domain; it reads NVSHELRTPL…QFTLRLPLTP (223 aa). Position 221 is a phosphohistidine; by autocatalysis (His-221). One can recognise a Response regulatory 1 domain in the interval 571 to 686; it reads IVLVVEDNPE…ELVARVVNLM (116 aa). Asp-619 bears the 4-aspartylphosphate mark. Residues 747-1010 form the Histidine kinase 2 domain; the sequence is NLSHELRTPL…QFTVVLPIIK (264 aa). Residue His-750 is modified to Phosphohistidine; by autocatalysis. 2 stretches are compositionally biased toward low complexity: residues 1013–1031 and 1042–1146; these read SSSN…SPPL and NYIN…SNNN. Disordered regions lie at residues 1013–1148, 1266–1285, and 1313–1350; these read SSSN…NNEK, NNSN…PPSS, and PLSE…KANS. Over residues 1313–1346 the composition is skewed to low complexity; it reads PLSELKSSSNNNNNNNNNSNNNNNNSMSPNLRSP. The region spanning 1359–1483 is the Response regulatory 2 domain; it reads QIMLVDDLEE…ELSNSILTLI (125 aa). Asp-1412 is subject to 4-aspartylphosphate. A disordered region spans residues 1500–1546; sequence QNNNNNNNNNNNNNNNNNNNNNNINNGNDDDSLLLTDSRPCKKANSQ. A compositionally biased stretch (low complexity) spans 1501–1526; the sequence is NNNNNNNNNNNNNNNNNNNNNNINNG.

The catalysed reaction is ATP + protein L-histidine = ADP + protein N-phospho-L-histidine.. Functionally, acts as a receptor histidine kinase for a signal transduction pathway. This protein undergoes an ATP-dependent autophosphorylation at a conserved histidine residue in the kinase core, and a phosphoryl group is then transferred to a conserved aspartate residue in the receiver domain. This chain is Hybrid signal transduction histidine kinase D (dhkD), found in Dictyostelium discoideum (Social amoeba).